The following is a 331-amino-acid chain: Ribosomal RNA small subunit methyltransferase H (331 aa).

S-adenosyl-L-methionine contacts are provided by residues 38-40, Asp56, Phe83, Asp100, and Gln107; that span reads GGY. Positions 287–331 are disordered; that stretch reads DEAELAENPRARSARLRVGVRTDAPAGKVDPQALGTPLIPKKGRR.

The protein belongs to the methyltransferase superfamily. RsmH family.

Its subcellular location is the cytoplasm. The catalysed reaction is cytidine(1402) in 16S rRNA + S-adenosyl-L-methionine = N(4)-methylcytidine(1402) in 16S rRNA + S-adenosyl-L-homocysteine + H(+). Specifically methylates the N4 position of cytidine in position 1402 (C1402) of 16S rRNA. This chain is Ribosomal RNA small subunit methyltransferase H, found in Cereibacter sphaeroides (strain ATCC 17023 / DSM 158 / JCM 6121 / CCUG 31486 / LMG 2827 / NBRC 12203 / NCIMB 8253 / ATH 2.4.1.) (Rhodobacter sphaeroides).